A 376-amino-acid chain; its full sequence is Chorismate synthase ARO2 (376 aa).

Ser-2 is subject to N-acetylserine. The active site involves His-17. Positions 39 to 61 (IQPQLTRRRPGQSKLSTPRDEKD) are disordered. Residues His-104 and Asp-339 contribute to the active site.

It belongs to the chorismate synthase family. In terms of assembly, homotetramer.

It catalyses the reaction 5-O-(1-carboxyvinyl)-3-phosphoshikimate = chorismate + phosphate. It carries out the reaction FMNH2 + NADP(+) = FMN + NADPH + 2 H(+). It participates in metabolic intermediate biosynthesis; chorismate biosynthesis; chorismate from D-erythrose 4-phosphate and phosphoenolpyruvate: step 7/7. Functionally, bifunctional chorismate synthase and flavin reductase that catalyzes the conversion of 5-enolpyruvylshikimate 3-phosphate (EPSP) to form chorismate, which is the last common intermediate in the synthesis of the three aromatic amino acids phenylalanine, tyrosine and tryptophan. Also acts as a flavin reductase (FR) able to generate reduced flavin mononucleotide in the presence of NADPH. This Saccharomyces cerevisiae (strain ATCC 204508 / S288c) (Baker's yeast) protein is Chorismate synthase ARO2.